A 471-amino-acid polypeptide reads, in one-letter code: Tryptophanase (471 aa).

N6-acetyllysine is present on residues Lys5, Lys115, and Lys156. N6-(pyridoxal phosphate)lysine is present on Lys270. The residue at position 450 (Lys450) is an N6-acetyllysine.

This sequence belongs to the beta-eliminating lyase family. In terms of assembly, homotetramer. Pyridoxal 5'-phosphate serves as cofactor.

It catalyses the reaction L-tryptophan + H2O = indole + pyruvate + NH4(+). Its pathway is amino-acid degradation; L-tryptophan degradation via pyruvate pathway; indole and pyruvate from L-tryptophan: step 1/1. The sequence is that of Tryptophanase (tnaA) from Escherichia coli O157:H7.